The sequence spans 344 residues: MVRPRHQPGGLCLLLLLLCQFMEDRSAQAGNCWLRQAKNGRCQVLYKTELSKEECCSTGRLSTSWTEEDVNDNTLFKWMIFNGGAPNCIPCKETCDNVDCGPGKKCRMNKKNKPRCVCAPDCSNITWKGPVCGLDGKTYRNECALLKARCKEQPELEVQYQGKCKKTCRDVNCPGSSTCVVDQTNNAYCVTCNRICPEPTSSEQYLCGNDGVTYSSACHLRKATCLLGRSIGLAYEGKCIKAKSCEDIQCTGGKKCLWDFKVGRGRCSLCDELCPDSKSEEPVCASDNATYASECAMKEAACSSGVLLEVKHSGSCNSISEDTEEEEEDEDQDYSFPISSILEW.

The first 29 residues, Met1 to Ala29, serve as a signal peptide directing secretion. Residues Gly30 to Gly103 enclose the TB domain. Disulfide bonds link Cys32–Cys55, Cys42–Cys88, Cys56–Cys91, Cys95–Cys106, Cys100–Cys116, Cys118–Cys150, Cys122–Cys143, Cys132–Cys164, Cys168–Cys179, Cys173–Cys189, Cys192–Cys225, Cys196–Cys218, Cys207–Cys239, Cys245–Cys256, Cys250–Cys267, Cys270–Cys302, Cys274–Cys295, and Cys284–Cys316. Positions Thr94 to Val117 constitute a Follistatin-like 1 domain. The 55-residue stretch at Asn112 to Lys166 folds into the Kazal-like 1 domain. N-linked (GlcNAc...) asparagine glycosylation occurs at Asn124. The region spanning Thr167–Val190 is the Follistatin-like 2 domain. In terms of domain architecture, Kazal-like 2 spans Asn186–Lys241. Residues Ser244–Ser268 form the Follistatin-like 3 domain. The 55-residue stretch at Arg264 to Ser318 folds into the Kazal-like 3 domain. The N-linked (GlcNAc...) asparagine glycan is linked to Asn288. A disordered region spans residues Gly314 to Trp344. Acidic residues predominate over residues Glu321–Asp333.

In terms of assembly, interacts with GDF11. Interacts with activin A/INHBA. Interacts with myostatin/MSTN.

The protein localises to the secreted. Its subcellular location is the nucleus. It is found in the nucleolus. In terms of biological role, multifunctional regulatory protein whose primary function is to antagonize members of the transforming growth factor beta (TGF-beta) superfamily including activin, myostatin, GDF11 or bone morphogenetic proteins (BMPs). Mechanistically, binds to these ligands in the extracellular space, blocking their type II receptor-binding site to inhibit downstream signaling. Plays an essential role in muscle fiber formation and growth both by preventing the repressive effects of myostatin and through SMAD3/AKT/mTOR signaling independently of myostatin. Also promotes neural differentiation by antagonizing the action BMP4. Acts as a specific inhibitor of the biosynthesis and secretion of pituitary follicle stimulating hormone (FSH) by sequestering activin A/INHBA. On the other hand, translocates into the nucleus where it down-regulates rRNA synthesis and ribosome biogenesis to maintain cellular energy homeostasis by binding to rDNA. The chain is Follistatin from Equus caballus (Horse).